A 99-amino-acid chain; its full sequence is uncharacterized protein (99 aa).

An N-terminal signal peptide occupies residues 1-17 (MMMNAFFPAMALMVLVG). Residue Cys-18 is the site of N-palmitoyl cysteine attachment. Cys-18 is lipidated: S-diacylglycerol cysteine.

The protein resides in the cell membrane. This is an uncharacterized protein from Shigella flexneri.